The sequence spans 383 residues: Succinyl-diaminopimelate desuccinylase (383 aa).

His70 serves as a coordination point for Zn(2+). The active site involves Asp72. Asp103 is a binding site for Zn(2+). Glu137 acts as the Proton acceptor in catalysis. Zn(2+) is bound by residues Glu138, Glu166, and His352.

Belongs to the peptidase M20A family. DapE subfamily. Homodimer. It depends on Zn(2+) as a cofactor. Co(2+) serves as cofactor.

It carries out the reaction N-succinyl-(2S,6S)-2,6-diaminopimelate + H2O = (2S,6S)-2,6-diaminopimelate + succinate. It functions in the pathway amino-acid biosynthesis; L-lysine biosynthesis via DAP pathway; LL-2,6-diaminopimelate from (S)-tetrahydrodipicolinate (succinylase route): step 3/3. Catalyzes the hydrolysis of N-succinyl-L,L-diaminopimelic acid (SDAP), forming succinate and LL-2,6-diaminopimelate (DAP), an intermediate involved in the bacterial biosynthesis of lysine and meso-diaminopimelic acid, an essential component of bacterial cell walls. This Hahella chejuensis (strain KCTC 2396) protein is Succinyl-diaminopimelate desuccinylase.